A 562-amino-acid polypeptide reads, in one-letter code: uncharacterized protein (562 aa).

Transmembrane regions (helical) follow at residues 10–27 (IYPE…YWVG), 34–53 (FSLG…GQFD), 63–85 (IFFL…QGIA), 92–114 (ALFA…KIAG), and 155–177 (FSVI…AIVL). 2 RCK C-terminal domains span residues 204–288 (TENA…HPDS) and 290–377 (DETQ…QLGV). Helical transmembrane passes span 387–404 (VAFW…GSLV), 408–430 (GNLP…FSWV), 443–465 (PTVW…ISAG), 475–497 (LGFS…AALV), 504–526 (FHPA…LGMI), and 539–561 (YTIT…ILIL).

It belongs to the AAE transporter (TC 2.A.81) family.

Its subcellular location is the cell membrane. This is an uncharacterized protein from Shewanella oneidensis (strain ATCC 700550 / JCM 31522 / CIP 106686 / LMG 19005 / NCIMB 14063 / MR-1).